We begin with the raw amino-acid sequence, 84 residues long: MELKKLMEHISITPDYRQAWKVVHKLSDILLLTICAVISGAEGWEDIEDFGETHLDFLKQYGDFENGIPVHDTIARVVSQGKIT.

This Escherichia coli (strain K12) protein is Inactive transposase YbfQ (ybfQ).